We begin with the raw amino-acid sequence, 284 residues long: Undecaprenyl-diphosphatase 2 (284 aa).

Helical transmembrane passes span 6–26, 46–66, 94–114, 119–139, 183–203, 227–247, and 262–282; these read VIFI…EFIP, FAEM…VVLY, FGMN…LFYD, LFNL…LLVV, IMGG…SFFL, TLWI…IIVM, and FAVY…TNII.

Belongs to the UppP family.

Its subcellular location is the cell membrane. The enzyme catalyses di-trans,octa-cis-undecaprenyl diphosphate + H2O = di-trans,octa-cis-undecaprenyl phosphate + phosphate + H(+). Functionally, catalyzes the dephosphorylation of undecaprenyl diphosphate (UPP). Confers resistance to bacitracin. The sequence is that of Undecaprenyl-diphosphatase 2 from Clostridioides difficile (strain 630) (Peptoclostridium difficile).